We begin with the raw amino-acid sequence, 304 residues long: Xylanase inhibitor protein 1 (304 aa).

The first 29 residues, 1 to 29, serve as a signal peptide directing secretion; the sequence is MVALGRRSWLVPLAMVLAVSSCLAGPAMA. Positions 34–304 constitute a GH18 domain; sequence GQMTVFWGRN…GYGKTVKYWA (271 aa). Intrachain disulfides connect cysteine 53–cysteine 93 and cysteine 190–cysteine 219.

It belongs to the glycosyl hydrolase 18 family. Xylanase inhibitor subfamily. Binds to fungal GH11 xylanases. Constitutively expressed in shoots.

It is found in the secreted. Its function is as follows. Fungal xylanase inhibitor. Possesses competitive inhibiting activity against fungal endo-1,4-beta-D-xylanases belonging to glycoside hydrolase family 11 (GH11). May function in plant defense against secreted fungal pathogen xylanases. Is similar to class III chitinases, but does not exhibit chitinase activity. This chain is Xylanase inhibitor protein 1, found in Oryza sativa subsp. japonica (Rice).